A 312-amino-acid polypeptide reads, in one-letter code: L-lactate dehydrogenase (312 aa).

NAD(+)-binding residues include V14, D35, and Y66. Residues Q83, R90, and 122–125 (NPVD) contribute to the substrate site. NAD(+) contacts are provided by residues 120–122 (ASN) and S145. Residue 150–153 (DSAR) participates in substrate binding. H177 (proton acceptor) is an active-site residue. Y220 is modified (phosphotyrosine). T229 contributes to the substrate binding site.

It belongs to the LDH/MDH superfamily. LDH family. In terms of assembly, homotetramer.

It is found in the cytoplasm. The catalysed reaction is (S)-lactate + NAD(+) = pyruvate + NADH + H(+). Its pathway is fermentation; pyruvate fermentation to lactate; (S)-lactate from pyruvate: step 1/1. Catalyzes the conversion of lactate to pyruvate. The sequence is that of L-lactate dehydrogenase from Mycoplasma pneumoniae (strain ATCC 29342 / M129 / Subtype 1) (Mycoplasmoides pneumoniae).